A 261-amino-acid polypeptide reads, in one-letter code: MVVLSVPAEVTVILLDIEGTTTPIAFVKDILFPYIEENVKEYLQTHWEEEECQQDVSLLRKQAEEDAHLDGAVPIPAASGNGVDDLQQMIQAVVDNVCWQMSLDRKTTALKQLQGHMWRAAFTAGRMKAEFFADVVPAVRKWREAGMKVYIYSSGSVEAQKLLFGHSTEGDILELVDGHFDTKIGHKVESESYRKIADSIGCSTNNILFLTDVTREASAAEEADVHVAVVVRPGNAGLTDDEKTYYSLITSFSELYLPSST.

Residues Asp-16 and Glu-18 each contribute to the Mg(2+) site. Substrate is bound by residues 153–154 and Lys-187; that span reads SS. Asp-212 contributes to the Mg(2+) binding site.

Belongs to the HAD-like hydrolase superfamily. MasA/MtnC family. Monomer. Mg(2+) serves as cofactor.

It localises to the cytoplasm. The protein resides in the nucleus. The catalysed reaction is 5-methylsulfanyl-2,3-dioxopentyl phosphate + H2O = 1,2-dihydroxy-5-(methylsulfanyl)pent-1-en-3-one + phosphate. The protein operates within amino-acid biosynthesis; L-methionine biosynthesis via salvage pathway; L-methionine from S-methyl-5-thio-alpha-D-ribose 1-phosphate: step 3/6. It participates in amino-acid biosynthesis; L-methionine biosynthesis via salvage pathway; L-methionine from S-methyl-5-thio-alpha-D-ribose 1-phosphate: step 4/6. Its function is as follows. Bifunctional enzyme that catalyzes the enolization of 2,3-diketo-5-methylthiopentyl-1-phosphate (DK-MTP-1-P) into the intermediate 2-hydroxy-3-keto-5-methylthiopentenyl-1-phosphate (HK-MTPenyl-1-P), which is then dephosphorylated to form the acireductone 1,2-dihydroxy-3-keto-5-methylthiopentene (DHK-MTPene). The chain is Enolase-phosphatase E1 from Homo sapiens (Human).